Reading from the N-terminus, the 894-residue chain is Eukaryotic translation initiation factor 3 subunit C (894 aa).

Disordered regions lie at residues 1-28 (MSRF…KANK) and 162-235 (SDYR…VTKM). 3 stretches are compositionally biased toward acidic residues: residues 12-22 (SDTDSSEDEVE), 169-189 (DEDG…EEVP), and 203-214 (SESESDSDDDDS). Over residues 215 to 224 (FNWSSEPDTN) the composition is skewed to polar residues. The region spanning 625 to 801 (YHMHINVELM…DCLIMHRVEP (177 aa)) is the PCI domain. Residues 824 to 894 (QILEPRTGRG…RRHPQKPRAF (71 aa)) form a disordered region. Residues 845-854 (RNERQGDKQK) show a composition bias toward basic and acidic residues. Over residues 855–870 (GSGGFQGERRGGPGGP) the composition is skewed to gly residues. Basic residues predominate over residues 884–894 (QRRHPQKPRAF).

The protein belongs to the eIF-3 subunit C family. Component of the eukaryotic translation initiation factor 3 (eIF-3) complex.

It localises to the cytoplasm. In terms of biological role, component of the eukaryotic translation initiation factor 3 (eIF-3) complex, which is involved in protein synthesis of a specialized repertoire of mRNAs and, together with other initiation factors, stimulates binding of mRNA and methionyl-tRNAi to the 40S ribosome. The eIF-3 complex specifically targets and initiates translation of a subset of mRNAs involved in cell proliferation. This is Eukaryotic translation initiation factor 3 subunit C from Caenorhabditis briggsae.